A 561-amino-acid polypeptide reads, in one-letter code: Potassium-transporting ATPase potassium-binding subunit (561 aa).

A run of 11 helical transmembrane segments spans residues 5–25, 63–83, 103–122, 133–153, 179–199, 255–275, 281–301, 380–400, 418–438, 485–505, and 531–551; these read IELFTMIAIIVLLTKPLGTYM, KYALTFLLVNMVMMIITYFIL, LAFNTVISFMTNTNLQHYAG, IVIVFLMFTSAASGLVTAAAI, LLPISMLATLILVWQGVPQTF, IEMLLMMLLPTSLIYTYGLMI, ALVLYISLFVIFILLAVGAVY, AGLQNIIMYTILTVFLTGLMV, LIALAILVHPFLILFSSALTV, IMTGLVMFFGRYITIILMLAV, and AIFIAVVLIVGALTFFPAVIL.

Belongs to the KdpA family. In terms of assembly, the system is composed of three essential subunits: KdpA, KdpB and KdpC.

The protein localises to the cell membrane. Part of the high-affinity ATP-driven potassium transport (or Kdp) system, which catalyzes the hydrolysis of ATP coupled with the electrogenic transport of potassium into the cytoplasm. This subunit binds the extracellular potassium ions and delivers the ions to the membrane domain of KdpB through an intramembrane tunnel. The polypeptide is Potassium-transporting ATPase potassium-binding subunit (Caldanaerobacter subterraneus subsp. tengcongensis (strain DSM 15242 / JCM 11007 / NBRC 100824 / MB4) (Thermoanaerobacter tengcongensis)).